Here is a 109-residue protein sequence, read N- to C-terminus: uncharacterized protein (109 aa).

The protein to E.coli YtfG C-terminal region.

This is an uncharacterized protein from Haemophilus influenzae (strain ATCC 51907 / DSM 11121 / KW20 / Rd).